The primary structure comprises 181 residues: Transcription termination/antitermination protein NusG (181 aa).

Residues 130–161 (PGEMVRVNDGPFADFNGVVEEVDYEKSRLKVS) form the KOW domain.

The protein belongs to the NusG family. In terms of assembly, monomer. Interacts with the transcription termination factor Rho and with RNA polymerase.

Its function is as follows. Participates in transcription elongation, termination and antitermination. In the absence of Rho, increases the rate of transcription elongation by the RNA polymerase (RNAP), probably by partially suppressing pausing. In the presence of Rho, modulates most Rho-dependent termination events by interacting with the RNAP to render the complex more susceptible to the termination activity of Rho. May be required to overcome a kinetic limitation of Rho to function at certain terminators. Also involved in ribosomal RNA transcriptional antitermination. This is Transcription termination/antitermination protein NusG from Shigella flexneri.